The chain runs to 258 residues: 4,5-dihydroxyphthalate decarboxylase (258 aa).

This sequence to P.testosteroni DHP decarboxylase.

The catalysed reaction is 4,5-dihydroxyphthalate + H(+) = 3,4-dihydroxybenzoate + CO2. The protein operates within xenobiotic degradation; phthalate degradation; 3,4-dihydroxybenzoate from phthalate: step 3/3. The sequence is that of 4,5-dihydroxyphthalate decarboxylase (pht5) from Pseudomonas putida (Arthrobacter siderocapsulatus).